The sequence spans 457 residues: Serine--tRNA ligase (457 aa).

252 to 254 (TAE) provides a ligand contact to L-serine. Residues 283–285 (RKE) and V299 each bind ATP. E306 is a binding site for L-serine. Residue 370 to 373 (EMVS) participates in ATP binding. Residue T406 coordinates L-serine.

It belongs to the class-II aminoacyl-tRNA synthetase family. Type-1 seryl-tRNA synthetase subfamily. As to quaternary structure, homodimer. The tRNA molecule binds across the dimer.

The protein resides in the cytoplasm. It catalyses the reaction tRNA(Ser) + L-serine + ATP = L-seryl-tRNA(Ser) + AMP + diphosphate + H(+). It carries out the reaction tRNA(Sec) + L-serine + ATP = L-seryl-tRNA(Sec) + AMP + diphosphate + H(+). The protein operates within aminoacyl-tRNA biosynthesis; selenocysteinyl-tRNA(Sec) biosynthesis; L-seryl-tRNA(Sec) from L-serine and tRNA(Sec): step 1/1. In terms of biological role, catalyzes the attachment of serine to tRNA(Ser). Is also able to aminoacylate tRNA(Sec) with serine, to form the misacylated tRNA L-seryl-tRNA(Sec), which will be further converted into selenocysteinyl-tRNA(Sec). This Saccharolobus islandicus (strain Y.G.57.14 / Yellowstone #1) (Sulfolobus islandicus) protein is Serine--tRNA ligase.